Consider the following 226-residue polypeptide: Urease accessory protein UreF (226 aa).

This sequence belongs to the UreF family. In terms of assembly, ureD, UreF and UreG form a complex that acts as a GTP-hydrolysis-dependent molecular chaperone, activating the urease apoprotein by helping to assemble the nickel containing metallocenter of UreC. The UreE protein probably delivers the nickel.

It is found in the cytoplasm. In terms of biological role, required for maturation of urease via the functional incorporation of the urease nickel metallocenter. The chain is Urease accessory protein UreF from Burkholderia multivorans (strain ATCC 17616 / 249).